A 145-amino-acid polypeptide reads, in one-letter code: uncharacterized protein (145 aa).

Position 1 is an N-acetylmethionine (Met-1). The interval 15 to 41 (QLKNNSGGTNGDRNSGANNGGGENSAP) is disordered. The segment covering 16–27 (LKNNSGGTNGDR) has biased composition (polar residues). 2 positions are modified to phosphoserine: Ser-121 and Ser-126. The tract at residues 125-145 (NSFDKQNAKNDDDEDDDDFFD) is disordered. The span at 135–145 (DDDEDDDDFFD) shows a compositional bias: acidic residues.

The protein belongs to the PDCD5 family.

This is an uncharacterized protein from Saccharomyces cerevisiae (strain ATCC 204508 / S288c) (Baker's yeast).